Consider the following 454-residue polypeptide: Cobyrinate a,c-diamide synthase (454 aa).

Residues 244–440 form the GATase cobBQ-type domain; sequence RLGIAKDKAF…LHVHFYQNPK (197 aa). The active-site Nucleophile is C326.

Belongs to the CobB/CbiA family. It depends on Mg(2+) as a cofactor.

It catalyses the reaction cob(II)yrinate + 2 L-glutamine + 2 ATP + 2 H2O = cob(II)yrinate a,c diamide + 2 L-glutamate + 2 ADP + 2 phosphate + 2 H(+). Its pathway is cofactor biosynthesis; adenosylcobalamin biosynthesis; cob(II)yrinate a,c-diamide from sirohydrochlorin (anaerobic route): step 10/10. Catalyzes the ATP-dependent amidation of the two carboxylate groups at positions a and c of cobyrinate, using either L-glutamine or ammonia as the nitrogen source. The sequence is that of Cobyrinate a,c-diamide synthase from Limosilactobacillus reuteri subsp. reuteri (strain JCM 1112) (Lactobacillus reuteri).